The sequence spans 1004 residues: Bifunctional glutamine synthetase adenylyltransferase/adenylyl-removing enzyme (1004 aa).

The segment at 1-497 (MCCTTVVVVR…LHAKLFYQPL (497 aa)) is adenylyl removase. Residues 502 to 1004 (GPASLEIRHG…KTFVRKVFGS (503 aa)) form an adenylyl transferase region.

Belongs to the GlnE family. Mg(2+) serves as cofactor.

The enzyme catalyses [glutamine synthetase]-O(4)-(5'-adenylyl)-L-tyrosine + phosphate = [glutamine synthetase]-L-tyrosine + ADP. The catalysed reaction is [glutamine synthetase]-L-tyrosine + ATP = [glutamine synthetase]-O(4)-(5'-adenylyl)-L-tyrosine + diphosphate. Involved in the regulation of glutamine synthetase GlnA, a key enzyme in the process to assimilate ammonia. When cellular nitrogen levels are high, the C-terminal adenylyl transferase (AT) inactivates GlnA by covalent transfer of an adenylyl group from ATP to specific tyrosine residue of GlnA, thus reducing its activity. Conversely, when nitrogen levels are low, the N-terminal adenylyl removase (AR) activates GlnA by removing the adenylyl group by phosphorolysis, increasing its activity. The regulatory region of GlnE binds the signal transduction protein PII (GlnB) which indicates the nitrogen status of the cell. This chain is Bifunctional glutamine synthetase adenylyltransferase/adenylyl-removing enzyme, found in Mycobacterium leprae (strain TN).